Here is an 882-residue protein sequence, read N- to C-terminus: DNA mismatch repair protein MutS (882 aa).

Residue 656 to 663 (GPNASGKS) coordinates ATP.

Belongs to the DNA mismatch repair MutS family.

Its function is as follows. This protein is involved in the repair of mismatches in DNA. It is possible that it carries out the mismatch recognition step. This protein has a weak ATPase activity. The protein is DNA mismatch repair protein MutS of Synechococcus sp. (strain ATCC 27144 / PCC 6301 / SAUG 1402/1) (Anacystis nidulans).